The sequence spans 320 residues: SPX domain-containing protein 4 (320 aa).

Positions 1–170 (MKFGKDFRSH…GGLLSLPFTQ (170 aa)) constitute an SPX domain. Disordered stretches follow at residues 209–233 (SSSA…VDVE) and 275–320 (CSGA…PRDE). The span at 278–289 (AITSESDSYSDS) shows a compositional bias: polar residues. Over residues 290–299 (QIEDAEDDDK) the composition is skewed to acidic residues. Over residues 304 to 313 (REQNTAQNAA) the composition is skewed to polar residues.

As to quaternary structure, homodimer. Interacts (via N-terminus) with PHR2 (via C-terminus) in the presence of inositol polyphosphate. Interacts with BHLH6. Post-translationally, degraded under Pi starvation conditions through the ubiquitin/26S proteasome pathway. In terms of tissue distribution, widely expressed. Detected in root cells, with the exception of epidermis, and in mesophyll and vascular bundles in leaves.

It is found in the membrane. The protein localises to the nucleus. Its subcellular location is the cytoplasm. Inositol polyphosphate sensor that associates with transcription factors to regulate Pi starvation responses. The SPX domain provides a basic binding surface for inositol polyphosphate signaling molecules. Interacts with PHR2 to inhibit its translocation to the nucleus and repress its DNA-binding activity, and then negatively regulate Pi signaling. In Oryza sativa subsp. japonica (Rice), this protein is SPX domain-containing protein 4.